The following is a 379-amino-acid chain: Arginine biosynthesis bifunctional protein ArgJ (379 aa).

Thr140, Lys160, Thr171, Glu249, Asn374, and Thr379 together coordinate substrate. The active-site Nucleophile is the Thr171.

Belongs to the ArgJ family. In terms of assembly, heterotetramer of two alpha and two beta chains.

It is found in the cytoplasm. The enzyme catalyses N(2)-acetyl-L-ornithine + L-glutamate = N-acetyl-L-glutamate + L-ornithine. It catalyses the reaction L-glutamate + acetyl-CoA = N-acetyl-L-glutamate + CoA + H(+). The protein operates within amino-acid biosynthesis; L-arginine biosynthesis; L-ornithine and N-acetyl-L-glutamate from L-glutamate and N(2)-acetyl-L-ornithine (cyclic): step 1/1. Its pathway is amino-acid biosynthesis; L-arginine biosynthesis; N(2)-acetyl-L-ornithine from L-glutamate: step 1/4. Catalyzes two activities which are involved in the cyclic version of arginine biosynthesis: the synthesis of N-acetylglutamate from glutamate and acetyl-CoA as the acetyl donor, and of ornithine by transacetylation between N(2)-acetylornithine and glutamate. The polypeptide is Arginine biosynthesis bifunctional protein ArgJ (Archaeoglobus fulgidus (strain ATCC 49558 / DSM 4304 / JCM 9628 / NBRC 100126 / VC-16)).